The primary structure comprises 432 residues: Keratin, type I cytoskeletal 18-B (432 aa).

Residues 1–21 (MSYSRSMYSSSSVVGGSPYRS) are compositionally biased toward low complexity. Residues 1-44 (MSYSRSMYSSSSVVGGSPYRSLSSAPRFAPGSSAASVHAGPGGS) form a disordered region. The tract at residues 2 to 82 (SYSRSMYSSS…NVSLMGGAQN (81 aa)) is head. The segment at 83–118 (EKETMQDLNDRLASYLERVRSLETANKELEVQIRQH) is coil 1A. The 311-residue stretch at 83-393 (EKETMQDLND…RLLEGDSFDL (311 aa)) folds into the IF rod domain. Residues 119-134 (TEKKGPAKDWSPYYKA) form a linker 1 region. The interval 135–226 (IEDLKKQVFD…KNHQDDVNEL (92 aa)) is coil 1B. The linker 12 stretch occupies residues 227–250 (QAQIARSAVTVEVDAPKSQDLGKI). Positions 251–388 (MAELRAQYDG…IHTYRRLLEG (138 aa)) are coil 2. Residues 389–432 (DSFDLQDAVPTVTTQTVKKVITTTQRIVDGKVVAESNDTEVLKA) form a tail region.

Belongs to the intermediate filament family. In terms of assembly, heterotetramer of two type I and two type II keratins. Keratin-18 associates with keratin-8. In terms of processing, phosphorylated. Post-translationally, proteolytically cleaved by caspases during epithelial cell apoptosis.

When phosphorylated, plays a role in filament reorganization. This chain is Keratin, type I cytoskeletal 18-B (krt18-b), found in Xenopus laevis (African clawed frog).